The primary structure comprises 471 residues: 1,3-beta-glucanosyltransferase GAS4 (471 aa).

The first 21 residues, 1-21 (MMVFSSTFIFLILELVVLCEA), serve as a signal peptide directing secretion. C70 and C99 are disulfide-bonded. Residue Y88 coordinates (1,3-beta-D-glucosyl)n. Residue N151 is glycosylated (N-linked (GlcNAc...) asparagine). 4 residues coordinate (1,3-beta-D-glucosyl)n: N160, E161, D203, and R208. E161 acts as the Proton donor in catalysis. 2 cysteine pairs are disulfide-bonded: C217–C354 and C238–C269. Catalysis depends on E266, which acts as the Nucleophile. Y298 serves as a coordination point for (1,3-beta-D-glucosyl)n. N-linked (GlcNAc...) asparagine glycosylation occurs at N398. The GPI-anchor amidated asparagine moiety is linked to residue N447. The propeptide at 448-471 (SASISGPLLPLGLCLLFFTFSLFF) is removed in mature form.

It belongs to the glycosyl hydrolase 72 family.

The protein localises to the cell membrane. In terms of biological role, splits internally a 1,3-beta-glucan molecule and transfers the newly generated reducing end (the donor) to the non-reducing end of another 1,3-beta-glucan molecule (the acceptor) forming a 1,3-beta linkage, resulting in the elongation of 1,3-beta-glucan chains in the cell wall. Involved in spore wall assembly. In Saccharomyces cerevisiae (strain ATCC 204508 / S288c) (Baker's yeast), this protein is 1,3-beta-glucanosyltransferase GAS4 (GAS4).